Here is a 222-residue protein sequence, read N- to C-terminus: N-acetyltransferase 8B (222 aa).

Residues 1–42 lie on the Cytoplasmic side of the membrane; it reads MVSYHICEYQDSDYKSVVDVFTKGAEEYIPSTFRHLLLLPRT. A helical; Signal-anchor for type II membrane protein membrane pass occupies residues 43-67; the sequence is LLLLLGVSLALVLVSGSWLLAVVCI. The 156-residue stretch at 62 to 217 folds into the N-acetyltransferase domain; it reads LAVVCIFFLL…VGIRFVQLNY (156 aa). The Lumenal segment spans residues 68–222; it reads FFLLPFLWFL…VQLNYSFPSA (155 aa). An N6-acetyllysine modification is found at lysine 99.

It belongs to the NAT8 family. Post-translationally, acetylation on Lys-99 modulates enzymatic activity.

It localises to the endoplasmic reticulum-Golgi intermediate compartment membrane. Its subcellular location is the endoplasmic reticulum membrane. The catalysed reaction is L-lysyl-[protein] + acetyl-CoA = N(6)-acetyl-L-lysyl-[protein] + CoA + H(+). In terms of biological role, endoplasmic reticulum (ER)-membrane-bound lysine N-acetyltransferase catalyzing the N6-acetylation of lysine residues in the lumen of the ER in various proteins, including PROM1 and BACE1, using acetyl-CoA as acetyl donor. Thereby, may regulate apoptosis through the acetylation and the regulation of the expression of PROM1. Acetylates and stabilizes BACE1 immature protein, leading to increased steady-state levels in neurons. By acting on BACE1 expression, may regulate amyloid beta-peptide formation. N(6)-lysine acetylation in ER maintains protein homeostasis and regulates reticulophagy. This chain is N-acetyltransferase 8B, found in Rattus norvegicus (Rat).